A 96-amino-acid polypeptide reads, in one-letter code: Co-chaperonin GroES (96 aa).

Belongs to the GroES chaperonin family. In terms of assembly, heptamer of 7 subunits arranged in a ring. Interacts with the chaperonin GroEL.

The protein localises to the cytoplasm. Functionally, together with the chaperonin GroEL, plays an essential role in assisting protein folding. The GroEL-GroES system forms a nano-cage that allows encapsulation of the non-native substrate proteins and provides a physical environment optimized to promote and accelerate protein folding. GroES binds to the apical surface of the GroEL ring, thereby capping the opening of the GroEL channel. The polypeptide is Co-chaperonin GroES (Paraburkholderia phymatum (strain DSM 17167 / CIP 108236 / LMG 21445 / STM815) (Burkholderia phymatum)).